The primary structure comprises 295 residues: UDP-3-O-acyl-N-acetylglucosamine deacetylase (295 aa).

Zn(2+) contacts are provided by His-77, His-233, and Asp-237. His-260 (proton donor) is an active-site residue.

It belongs to the LpxC family. Zn(2+) is required as a cofactor.

The catalysed reaction is a UDP-3-O-[(3R)-3-hydroxyacyl]-N-acetyl-alpha-D-glucosamine + H2O = a UDP-3-O-[(3R)-3-hydroxyacyl]-alpha-D-glucosamine + acetate. Its pathway is glycolipid biosynthesis; lipid IV(A) biosynthesis; lipid IV(A) from (3R)-3-hydroxytetradecanoyl-[acyl-carrier-protein] and UDP-N-acetyl-alpha-D-glucosamine: step 2/6. Its function is as follows. Catalyzes the hydrolysis of UDP-3-O-myristoyl-N-acetylglucosamine to form UDP-3-O-myristoylglucosamine and acetate, the committed step in lipid A biosynthesis. This chain is UDP-3-O-acyl-N-acetylglucosamine deacetylase, found in Solibacter usitatus (strain Ellin6076).